The sequence spans 313 residues: Formimidoylglutamase (313 aa).

The Mn(2+) site is built by H130, D155, H157, D159, D241, and D243.

This sequence belongs to the arginase family. Mn(2+) serves as cofactor.

It carries out the reaction N-formimidoyl-L-glutamate + H2O = formamide + L-glutamate. Its pathway is amino-acid degradation; L-histidine degradation into L-glutamate; L-glutamate from N-formimidoyl-L-glutamate (hydrolase route): step 1/1. Its function is as follows. Catalyzes the conversion of N-formimidoyl-L-glutamate to L-glutamate and formamide. This chain is Formimidoylglutamase, found in Citrobacter koseri (strain ATCC BAA-895 / CDC 4225-83 / SGSC4696).